The chain runs to 468 residues: Probable acid phosphatase DIA3 (468 aa).

The first 20 residues, 1–20 (MVKPVIFAICLGVLLSKALS), serve as a signal peptide directing secretion. Catalysis depends on H76, which acts as the Nucleophile. N-linked (GlcNAc...) asparagine glycosylation is found at N98, N163, N193, N202, N238, N251, and N316. Residue D339 is the Proton donor of the active site. 4 N-linked (GlcNAc...) asparagine glycosylation sites follow: N357, N391, N457, and N462.

The protein belongs to the histidine acid phosphatase family.

The enzyme catalyses a phosphate monoester + H2O = an alcohol + phosphate. The chain is Probable acid phosphatase DIA3 (DIA3) from Saccharomyces cerevisiae (strain ATCC 204508 / S288c) (Baker's yeast).